The primary structure comprises 684 residues: Threonine--tRNA ligase (684 aa).

Positions 1 to 60 (MSISITLHRSGTSRTQQVDTTTTGLDLFGSDRAVVAMRVDGNLVDLQRELHDGAEVEPVE) constitute a TGS domain. Residues 256–567 (DHRKLGAELD…LTEHYAGAFP (312 aa)) form a catalytic region. Cys-361, His-412, and His-544 together coordinate Zn(2+).

This sequence belongs to the class-II aminoacyl-tRNA synthetase family. In terms of assembly, homodimer. Requires Zn(2+) as cofactor.

Its subcellular location is the cytoplasm. The catalysed reaction is tRNA(Thr) + L-threonine + ATP = L-threonyl-tRNA(Thr) + AMP + diphosphate + H(+). In terms of biological role, catalyzes the attachment of threonine to tRNA(Thr) in a two-step reaction: L-threonine is first activated by ATP to form Thr-AMP and then transferred to the acceptor end of tRNA(Thr). Also edits incorrectly charged L-seryl-tRNA(Thr). This is Threonine--tRNA ligase from Cutibacterium acnes (strain DSM 16379 / KPA171202) (Propionibacterium acnes).